The following is a 422-amino-acid chain: UDP-N-acetylglucosamine 1-carboxyvinyltransferase (422 aa).

22-23 contributes to the phosphoenolpyruvate binding site; the sequence is KN. Residue R93 coordinates UDP-N-acetyl-alpha-D-glucosamine. The active-site Proton donor is C117. C117 carries the 2-(S-cysteinyl)pyruvic acid O-phosphothioketal modification. UDP-N-acetyl-alpha-D-glucosamine-binding positions include 122-126, D308, and L330; that span reads RPVDL.

Belongs to the EPSP synthase family. MurA subfamily.

It is found in the cytoplasm. The enzyme catalyses phosphoenolpyruvate + UDP-N-acetyl-alpha-D-glucosamine = UDP-N-acetyl-3-O-(1-carboxyvinyl)-alpha-D-glucosamine + phosphate. The protein operates within cell wall biogenesis; peptidoglycan biosynthesis. Functionally, cell wall formation. Adds enolpyruvyl to UDP-N-acetylglucosamine. The chain is UDP-N-acetylglucosamine 1-carboxyvinyltransferase from Helicobacter pylori (strain Shi470).